The primary structure comprises 308 residues: L-lactate dehydrogenase 2 (308 aa).

NAD(+)-binding positions include Val13, Asp34, Arg39, Tyr64, and 78–79 (GV). Arg87 provides a ligand contact to substrate. Thr100 lines the NAD(+) pocket. 119-122 (NPVD) lines the substrate pocket. An NAD(+)-binding site is contributed by Thr142. 147–150 (DSMR) is a substrate binding site. His174 serves as the catalytic Proton acceptor. Thr224 provides a ligand contact to substrate.

This sequence belongs to the LDH/MDH superfamily. LDH family. In terms of assembly, homotetramer.

It localises to the cytoplasm. It catalyses the reaction (S)-lactate + NAD(+) = pyruvate + NADH + H(+). It functions in the pathway fermentation; pyruvate fermentation to lactate; (S)-lactate from pyruvate: step 1/1. In terms of biological role, catalyzes the conversion of lactate to pyruvate. The sequence is that of L-lactate dehydrogenase 2 from Lactobacillus acidophilus (strain ATCC 700396 / NCK56 / N2 / NCFM).